A 463-amino-acid chain; its full sequence is MEERLSTTSSYPSHPGRSVEEDHNTLLASSSISSIIRGTRGHLNNFIESVGNWLVPSSSGRDDDAVSLDSCQSVYSPVRHHINSGTGGGILMEPSSIHVPENYYSVTIGEAQMVVLKRYQNLRLIGSGAQGIVCSAFDTVRNEQVAIKKLSRPFQNVTHAKRAYRELKLMSLVNHKNIIGILNCFTPQKKLDEFNDLYIVMELMDANLCQVIQMDLDHERLSYLLYQMLCGIRHLHSAGIIHRDLKPSNIVVRSDCTLKILDFGLARTAIEAFMMTPYVVTRYYRAPEVILGMGYKENVDVWSIGCIFGELIRGRVLFPGGDHIDQWTRIIEQLGTPDRSFLERLQPTVRNYVENRPRYQATPFEVLFSDNMFPMTADSSRLTGAQARDLLSRMLVIDPERRISVDDALRHPYVNVWFDEIEVYAPPPLPYDHNMDVEQNVDSWREHIFRELTDYARTHDIYS.

The segment covering 1–12 (MEERLSTTSSYP) has biased composition (polar residues). Positions 1-23 (MEERLSTTSSYPSHPGRSVEEDH) are disordered. Positions 119-412 (YQNLRLIGSG…ISVDDALRHP (294 aa)) constitute a Protein kinase domain. ATP is bound by residues 126 to 131 (GSGAQG) and Lys148. The active-site Proton acceptor is Asp244. At Thr276 the chain carries Phosphothreonine. The TXY signature appears at 276-278 (TPY). Tyr278 carries the phosphotyrosine modification.

This sequence belongs to the protein kinase superfamily. CMGC Ser/Thr protein kinase family. MAP kinase subfamily. In terms of assembly, binds to the scaffolding protein, unc-16. Unc-16 also binds other components of the JNK signaling pathway. Interacts with daf-16. Mg(2+) is required as a cofactor. In terms of processing, dually phosphorylated on Thr-276 and Tyr-278, which activates the enzyme. As to expression, expressed in most neurons, including nerve ring, head ganglions, dorsal and ventral nerve cords and tail ganglions. The Thr-276/Tyr-278 phosphorylated form is present in the nerve ring upon heat exposure.

Its subcellular location is the cytoplasm. The protein resides in the perikaryon. It is found in the cell projection. The protein localises to the axon. It carries out the reaction L-seryl-[protein] + ATP = O-phospho-L-seryl-[protein] + ADP + H(+). The enzyme catalyses L-threonyl-[protein] + ATP = O-phospho-L-threonyl-[protein] + ADP + H(+). Activated by threonine and tyrosine phosphorylation by either of the dual specificity kinases, jkk-1 and mek-1. Serine/threonine-protein kinase which responds to activation by environmental stress by phosphorylating a number of transcription factors such as daf-16, and thus regulates transcriptional activity. By phosphorylating daf-16, plays a role in daf-16 nuclear translocation in intestinal cells in response to environmental stresses such as heat and oxidative stresses. Downstream of jkk-1, may coordinate locomotion via type-D GABAergic motoneurons and regulates synaptic vesicle transport in conjunction with unc-16. Independently of jkk-1, may regulate some mechanosensory responses, such as response to touch. Independently of jkk-1 and downstream of mek-1, plays a role in resistance to heavy metals, such as Cu(2+) or Cd(2+). Regulates germline cell apoptosis in response to heavy metals such as Cu(2+) and arsenite. Required for dopaminergic CEP neuron degeneration in response to Mn(2+). Required for normal sleep bout quantity and arousal thresholds during the transition from the last larval stage to adulthood in well-fed animals. Downstream of jkk-1 but independently of mek-1, positively regulates lifespan. This Caenorhabditis elegans protein is Stress-activated protein kinase jnk-1 (jnk-1).